We begin with the raw amino-acid sequence, 467 residues long: Argininosuccinate lyase (467 aa).

It belongs to the lyase 1 family. Argininosuccinate lyase subfamily.

The protein localises to the cytoplasm. The catalysed reaction is 2-(N(omega)-L-arginino)succinate = fumarate + L-arginine. The protein operates within amino-acid biosynthesis; L-arginine biosynthesis; L-arginine from L-ornithine and carbamoyl phosphate: step 3/3. The chain is Argininosuccinate lyase from Allorhizobium ampelinum (strain ATCC BAA-846 / DSM 112012 / S4) (Agrobacterium vitis (strain S4)).